The sequence spans 275 residues: Thymidylate synthase (275 aa).

Residue 138–139 (RR) participates in dUMP binding. Cys158 functions as the Nucleophile in the catalytic mechanism. DUMP-binding positions include 178 to 181 (RSCD), Asn189, and 219 to 221 (HIY). Asp181 contributes to the (6R)-5,10-methylene-5,6,7,8-tetrahydrofolate binding site. Ala274 contributes to the (6R)-5,10-methylene-5,6,7,8-tetrahydrofolate binding site.

Belongs to the thymidylate synthase family. Bacterial-type ThyA subfamily. As to quaternary structure, homodimer.

The protein resides in the cytoplasm. The enzyme catalyses dUMP + (6R)-5,10-methylene-5,6,7,8-tetrahydrofolate = 7,8-dihydrofolate + dTMP. The protein operates within pyrimidine metabolism; dTTP biosynthesis. Its function is as follows. Catalyzes the reductive methylation of 2'-deoxyuridine-5'-monophosphate (dUMP) to 2'-deoxythymidine-5'-monophosphate (dTMP) while utilizing 5,10-methylenetetrahydrofolate (mTHF) as the methyl donor and reductant in the reaction, yielding dihydrofolate (DHF) as a by-product. This enzymatic reaction provides an intracellular de novo source of dTMP, an essential precursor for DNA biosynthesis. This is Thymidylate synthase from Fusobacterium nucleatum subsp. nucleatum (strain ATCC 25586 / DSM 15643 / BCRC 10681 / CIP 101130 / JCM 8532 / KCTC 2640 / LMG 13131 / VPI 4355).